Reading from the N-terminus, the 359-residue chain is MRVLGIETSCDETAAAIVERDDMGEGRILSNVVLSQIAEHEPYGGVVPEIAARAHAEALDRLVDRALNDAGLKLYEVDAVAATAGPGLIGGLIVGLMTAKALAMAAQKPFYAVNHLEGHALTARLTDGLPFPYLLLLVSGGHTQMVLVRGIGDYERLGTTIDDALGEAFDKTAKLLGLPYPGGPAVERMALQGDQKRFALPRPLKGEARLDFSFSGLKTAVRQTATELVPLTDQDVTDICASFQAAVADTLSDRVGRSLERFKTEFPDCATPSLVVAGGVAANKTLRAALENLCTRHGFAFIAPPLNLCTDNAAMIAWAGAERAATQAPDSLDIAPRSRWPLDEKSAPVFGTGRRGAKA.

Fe cation is bound by residues histidine 115 and histidine 119. Substrate-binding positions include 137–141 (LVSGG), aspartate 170, glycine 183, and asparagine 283. A Fe cation-binding site is contributed by aspartate 311. The tract at residues 328-359 (APDSLDIAPRSRWPLDEKSAPVFGTGRRGAKA) is disordered.

Belongs to the KAE1 / TsaD family. The cofactor is Fe(2+).

It localises to the cytoplasm. The catalysed reaction is L-threonylcarbamoyladenylate + adenosine(37) in tRNA = N(6)-L-threonylcarbamoyladenosine(37) in tRNA + AMP + H(+). In terms of biological role, required for the formation of a threonylcarbamoyl group on adenosine at position 37 (t(6)A37) in tRNAs that read codons beginning with adenine. Is involved in the transfer of the threonylcarbamoyl moiety of threonylcarbamoyl-AMP (TC-AMP) to the N6 group of A37, together with TsaE and TsaB. TsaD likely plays a direct catalytic role in this reaction. This chain is tRNA N6-adenosine threonylcarbamoyltransferase, found in Brucella ovis (strain ATCC 25840 / 63/290 / NCTC 10512).